Here is an 820-residue protein sequence, read N- to C-terminus: Leucine--tRNA ligase (820 aa).

A 'HIGH' region motif is present at residues 40–51 (PYPSGAGLHVGH). The 'KMSKS' region signature appears at 601-605 (KMSKS). ATP is bound at residue Lys-604.

It belongs to the class-I aminoacyl-tRNA synthetase family.

It localises to the cytoplasm. The catalysed reaction is tRNA(Leu) + L-leucine + ATP = L-leucyl-tRNA(Leu) + AMP + diphosphate. The polypeptide is Leucine--tRNA ligase (Chlamydia abortus (strain DSM 27085 / S26/3) (Chlamydophila abortus)).